Consider the following 747-residue polypeptide: Homeobox-leucine zipper protein GLABRA 2 (747 aa).

Positions 31 to 112 (RNASSGSTNP…KKYHRHTTDQ (82 aa)) are disordered. Positions 58–68 (EMSSENSGPTR) are enriched in polar residues. A compositionally biased stretch (acidic residues) spans 73–90 (EDLEGEDHDDEEEEEEDG). Over residues 97-107 (TNKRKRKKYHR) the composition is skewed to basic residues. The homeobox DNA-binding region spans 101–160 (KRKKYHRHTTDQIRHMEALFKETPHPDEKQRQQLSKQLGLAPRQVKFWFQNRRTQIKAIQ). Residues 155 to 223 (QIKAIQERHE…LDKLRAALGR (69 aa)) are a coiled coil. Positions 250 to 489 (FALEKSRIAE…LQLHCERLVF (240 aa)) constitute an START domain.

This sequence belongs to the HD-ZIP homeobox family. Class IV subfamily. As to quaternary structure, interacts with GIR1 and GIR2. In terms of tissue distribution, expressed in individual developing trichome cells of the emerging leaf primordia. Expressed in differentiating hairless cells of root epidermis.

It is found in the nucleus. Functionally, transcription factor involved in the determination of epidermal cell identity. Required for correct morphological development and maturation of trichomes. Regulates the frequency of trichome initiation and determines trichome spacing. Acts as a negative factor for root hair development. Required for ectopic repression of root hair development in a subset of epidermal cells. May suppress hair formation in root epidermis by promoting differentiation into hairless epidermal cells. Directly suppresses the bHLH transcription factor genes, RHD6, RSL1, RSL2, LRL1, and LRL2, which have diverse functions in root hair development. Required for normal development of seed coat mucilage. Involved in the control of seed oil accumulation. Acts as a negative regulator of anthocyanin biosynthesis. May directly repress the expression of some component genes from the MYB-bHLH-WD40 (MBW) transcriptional activator complex. The MBW complex activates the transcription of late biosynthesis genes in the flavonoid pathway, leading to the production of anthocyanins. The protein is Homeobox-leucine zipper protein GLABRA 2 of Arabidopsis thaliana (Mouse-ear cress).